A 167-amino-acid polypeptide reads, in one-letter code: MIPTDTAPPSKPAQGHKGYKNRRRLSRELALQGIYQWRLAGGNAQEIDLQLQQVNFYSKADGSYFSDLLQGVLEHSRDLEAQIQAYLDRQLAELSPVECSILLIGTYEMVHHPEIPCRAIINEAIELAKSYGGTDGHKYVNGVLDKLAAQLRAVELQSSPVRNKDPH.

A disordered region spans residues 1-21 (MIPTDTAPPSKPAQGHKGYKN).

This sequence belongs to the NusB family.

Its function is as follows. Involved in transcription antitermination. Required for transcription of ribosomal RNA (rRNA) genes. Binds specifically to the boxA antiterminator sequence of the ribosomal RNA (rrn) operons. This Nitrosomonas eutropha (strain DSM 101675 / C91 / Nm57) protein is Transcription antitermination protein NusB.